The chain runs to 210 residues: Riboflavin kinase (210 aa).

Residues Met1–Ser81 form an H-T-H motif-like region. The interval Ile82 to Leu210 is riboflavin kinase. Gly91–Ala96 provides a ligand contact to CDP. 2 residues coordinate Mg(2+): Thr120 and Asn122. FMN is bound by residues Thr177 and Glu185. CDP is bound at residue Val190 to Arg193.

Belongs to the archaeal riboflavin kinase family. Requires Mg(2+) as cofactor.

It carries out the reaction riboflavin + CTP = CDP + FMN + H(+). It functions in the pathway cofactor biosynthesis; FMN biosynthesis; FMN from riboflavin (CTP route): step 1/1. Its function is as follows. Catalyzes the CTP-dependent phosphorylation of riboflavin (vitamin B2) to form flavin mononucleotide (FMN). The sequence is that of Riboflavin kinase (ribK) from Pyrobaculum arsenaticum (strain DSM 13514 / JCM 11321 / PZ6).